The following is a 113-amino-acid chain: Ribonuclease P protein component (113 aa).

The protein belongs to the RnpA family. Consists of a catalytic RNA component (M1 or rnpB) and a protein subunit.

The enzyme catalyses Endonucleolytic cleavage of RNA, removing 5'-extranucleotides from tRNA precursor.. RNaseP catalyzes the removal of the 5'-leader sequence from pre-tRNA to produce the mature 5'-terminus. It can also cleave other RNA substrates such as 4.5S RNA. The protein component plays an auxiliary but essential role in vivo by binding to the 5'-leader sequence and broadening the substrate specificity of the ribozyme. This Vesicomyosocius okutanii subsp. Calyptogena okutanii (strain HA) protein is Ribonuclease P protein component.